The primary structure comprises 631 residues: tRNA uridine 5-carboxymethylaminomethyl modification enzyme MnmG (631 aa).

Residues 13 to 18, Val-125, and Ser-180 each bind FAD; that span reads GGGHAG. 273–287 provides a ligand contact to NAD(+); it reads GPRYCPSIEDKVMRF. Gln-370 provides a ligand contact to FAD.

The protein belongs to the MnmG family. Homodimer. Heterotetramer of two MnmE and two MnmG subunits. The cofactor is FAD.

The protein resides in the cytoplasm. NAD-binding protein involved in the addition of a carboxymethylaminomethyl (cmnm) group at the wobble position (U34) of certain tRNAs, forming tRNA-cmnm(5)s(2)U34. The chain is tRNA uridine 5-carboxymethylaminomethyl modification enzyme MnmG from Vibrio campbellii (strain ATCC BAA-1116).